Consider the following 375-residue polypeptide: Succinyl-diaminopimelate desuccinylase (375 aa).

A Zn(2+)-binding site is contributed by histidine 66. The active site involves aspartate 68. Aspartate 99 contacts Zn(2+). The active-site Proton acceptor is the glutamate 133. Zn(2+)-binding residues include glutamate 134, glutamate 162, and histidine 348.

This sequence belongs to the peptidase M20A family. DapE subfamily. In terms of assembly, homodimer. Requires Zn(2+) as cofactor. Co(2+) is required as a cofactor.

It catalyses the reaction N-succinyl-(2S,6S)-2,6-diaminopimelate + H2O = (2S,6S)-2,6-diaminopimelate + succinate. Its pathway is amino-acid biosynthesis; L-lysine biosynthesis via DAP pathway; LL-2,6-diaminopimelate from (S)-tetrahydrodipicolinate (succinylase route): step 3/3. In terms of biological role, catalyzes the hydrolysis of N-succinyl-L,L-diaminopimelic acid (SDAP), forming succinate and LL-2,6-diaminopimelate (DAP), an intermediate involved in the bacterial biosynthesis of lysine and meso-diaminopimelic acid, an essential component of bacterial cell walls. The polypeptide is Succinyl-diaminopimelate desuccinylase (Salmonella agona (strain SL483)).